We begin with the raw amino-acid sequence, 78 residues long: Short neurotoxin OH-26 (78 aa).

The first 21 residues, 1 to 21 (MKNLLLTFLVVTIVCLDLGYT), serve as a signal peptide directing secretion. Cystine bridges form between Cys-24/Cys-40, Cys-33/Cys-58, Cys-62/Cys-70, and Cys-71/Cys-76.

This sequence belongs to the three-finger toxin family. Short-chain subfamily. In terms of tissue distribution, expressed by the venom gland.

The protein localises to the secreted. In terms of biological role, this three-finger toxin binds and inhibits the nicotinic acetylcholine receptor (nAChR). This is Short neurotoxin OH-26 from Ophiophagus hannah (King cobra).